The following is a 430-amino-acid chain: Adenylosuccinate synthetase (430 aa).

GTP contacts are provided by residues 12–18 and 40–42; these read GDEGKGK and GHT. Asp13 serves as the catalytic Proton acceptor. Mg(2+)-binding residues include Asp13 and Gly40. Residues 13–16, 38–41, Thr128, Arg142, Gln223, Thr238, and Arg302 contribute to the IMP site; these read DEGK and NAGH. Residue His41 is the Proton donor of the active site. Residue 298 to 304 participates in substrate binding; the sequence is TTTGRPR. GTP contacts are provided by residues Arg304, 330–332, and 412–414; these read SID and SVG.

Belongs to the adenylosuccinate synthetase family. As to quaternary structure, homodimer. Requires Mg(2+) as cofactor.

The protein resides in the cytoplasm. It catalyses the reaction IMP + L-aspartate + GTP = N(6)-(1,2-dicarboxyethyl)-AMP + GDP + phosphate + 2 H(+). Its pathway is purine metabolism; AMP biosynthesis via de novo pathway; AMP from IMP: step 1/2. In terms of biological role, plays an important role in the de novo pathway of purine nucleotide biosynthesis. Catalyzes the first committed step in the biosynthesis of AMP from IMP. The chain is Adenylosuccinate synthetase from Streptococcus pyogenes serotype M2 (strain MGAS10270).